Here is a 66-residue protein sequence, read N- to C-terminus: UPF0337 protein M6_Spy1542 (66 aa).

Over residues 1–10 (MSEEKLKAKV) the composition is skewed to basic and acidic residues. The disordered stretch occupies residues 1–22 (MSEEKLKAKVEQASGSLKEGAG).

The protein belongs to the UPF0337 (CsbD) family.

This chain is UPF0337 protein M6_Spy1542, found in Streptococcus pyogenes serotype M6 (strain ATCC BAA-946 / MGAS10394).